The following is a 109-amino-acid chain: Small ribosomal subunit protein uS17 (109 aa).

The protein belongs to the universal ribosomal protein uS17 family. As to quaternary structure, part of the 30S ribosomal subunit.

Functionally, one of the primary rRNA binding proteins, it binds specifically to the 5'-end of 16S ribosomal RNA. This chain is Small ribosomal subunit protein uS17, found in Methanosarcina mazei (strain ATCC BAA-159 / DSM 3647 / Goe1 / Go1 / JCM 11833 / OCM 88) (Methanosarcina frisia).